The sequence spans 1201 residues: Putative disease resistance protein At4g19050 (1201 aa).

33 to 40 (GEAGIGKT) provides a ligand contact to ATP. LRR repeat units follow at residues 469-491 (KLRVLVIRDCDLIDNIDKLSGLQ), 492-514 (GLHVLEVSGASSLVNIPDDFFKN), 517-539 (QLQSLNLSGLAIKSSPSTIEKLS), 540-562 (MLRCFILRHCSELQDLPNFIVET), 680-701 (ELRILDMSKTSLPELADTIADV), 703-725 (NLNKLLLRNCSLIEELPSIEKLT), 726-748 (HLEVFDVSGCIKLKNINGSFGEM), 750-771 (YLHEVNLSETNLSELPDKISEL), 773-795 (NLKELIIRKCSKLKTLPNLEKLT), 796-818 (NLEIFDVSGCTELETIEGSFENL), 820-841 (CLHKVNLSETNLGELPNKISEL), 843-865 (NLKELILRNCSKLKALPNLEKLT), 866-888 (HLVIFDVSGCTNLDKIEESFESM), and 890-911 (YLCEVNLSGTNLKTFPELPKQS). The segment covering 1162–1180 (DEPRIGARITDEISEDQPH) has biased composition (basic and acidic residues). Residues 1162 to 1201 (DEPRIGARITDEISEDQPHKNTIGPETQTPTQPTKATDTV) form a disordered region. The segment covering 1185-1201 (GPETQTPTQPTKATDTV) has biased composition (polar residues).

Belongs to the disease resistance NB-LRR family.

In terms of biological role, potential disease resistance protein. The polypeptide is Putative disease resistance protein At4g19050 (Arabidopsis thaliana (Mouse-ear cress)).